The primary structure comprises 190 residues: Elongation factor P (190 aa).

The protein belongs to the elongation factor P family.

Its subcellular location is the cytoplasm. The protein operates within protein biosynthesis; polypeptide chain elongation. In terms of biological role, involved in peptide bond synthesis. Stimulates efficient translation and peptide-bond synthesis on native or reconstituted 70S ribosomes in vitro. Probably functions indirectly by altering the affinity of the ribosome for aminoacyl-tRNA, thus increasing their reactivity as acceptors for peptidyl transferase. The sequence is that of Elongation factor P from Sulfurihydrogenibium sp. (strain YO3AOP1).